The sequence spans 38 residues: Bacteriocin BAC79 (38 aa).

The antimicrobial activity of BAC79 was completely lost after treatment with enzymes trypsin, pepsin, proteinase-K, and carboxypeptidase, while there was no loss of activity with either amylase or lipase. Functionally, has antibacterial activity against a wide spectrum of Gram-positive and Gram-negative bacteria, including L.monocytogenes which is inhibited through disruption of the cell membrane. In Weissella confusa (Lactobacillus confusus), this protein is Bacteriocin BAC79.